The chain runs to 379 residues: Cytochrome b (379 aa).

Transmembrane regions (helical) follow at residues 34–54 (FGSL…LLAT), 78–99 (WLIR…YLHI), 114–134 (WNIG…GYVL), and 179–199 (FFAL…IHLT). Residues H84 and H98 each coordinate heme b. Residues H183 and H197 each coordinate heme b. H202 contributes to the a ubiquinone binding site. The next 4 helical transmembrane spans lie at 227–247 (TKDM…AFFF), 289–309 (LGGV…PLLH), 321–341 (MSQL…WIGS), and 348–368 (FIII…FLFP).

The protein belongs to the cytochrome b family. The cytochrome bc1 complex contains 11 subunits: 3 respiratory subunits (MT-CYB, CYC1 and UQCRFS1), 2 core proteins (UQCRC1 and UQCRC2) and 6 low-molecular weight proteins (UQCRH/QCR6, UQCRB/QCR7, UQCRQ/QCR8, UQCR10/QCR9, UQCR11/QCR10 and a cleavage product of UQCRFS1). This cytochrome bc1 complex then forms a dimer. Heme b serves as cofactor.

The protein localises to the mitochondrion inner membrane. Functionally, component of the ubiquinol-cytochrome c reductase complex (complex III or cytochrome b-c1 complex) that is part of the mitochondrial respiratory chain. The b-c1 complex mediates electron transfer from ubiquinol to cytochrome c. Contributes to the generation of a proton gradient across the mitochondrial membrane that is then used for ATP synthesis. The protein is Cytochrome b (MT-CYB) of Tinamus major (Great tinamou).